Consider the following 225-residue polypeptide: MAEGETESPRPKKRGPYISSVTSQSVNVVIRGVVLFFIGVFLALVLNLLQIQRNVTLFPPDVITSIFSSAWWVPPCCGTASAVIGLLYPCIDRHLGEPHKFKREWSSVMRCVAVFVGINHASAKVDFDNNFQFSLTLAALSVGLWWTFDRSRSGFGLGVGIAFLATVVTQLLVYNGVYQYTSPDFLYVRSWLPCIFFAGGITMGNIGRQLAMYECKVIAEKSHQE.

At 1–28 (MAEGETESPRPKKRGPYISSVTSQSVNV) the chain is on the cytoplasmic side. Residues 29-51 (VIRGVVLFFIGVFLALVLNLLQI) traverse the membrane as a helical segment. Residues 52–70 (QRNVTLFPPDVITSIFSSA) are Lumenal-facing. Residues 71 to 88 (WWVPPCCGTASAVIGLLY) form a helical membrane-spanning segment. At 89 to 103 (PCIDRHLGEPHKFKR) the chain is on the cytoplasmic side. A helical transmembrane segment spans residues 104–126 (EWSSVMRCVAVFVGINHASAKVD). The Lumenal segment spans residues 127 to 129 (FDN). The helical transmembrane segment at 130 to 148 (NFQFSLTLAALSVGLWWTF) threads the bilayer. The Cytoplasmic segment spans residues 149 to 153 (DRSRS). Ser151 bears the Phosphoserine mark. A helical membrane pass occupies residues 154–175 (GFGLGVGIAFLATVVTQLLVYN). The Lumenal portion of the chain corresponds to 176–189 (GVYQYTSPDFLYVR). The chain crosses the membrane as a helical span at residues 190-207 (SWLPCIFFAGGITMGNIG). Over 208–225 (RQLAMYECKVIAEKSHQE) the chain is Cytoplasmic. The residue at position 215 (Cys215) is a Cysteine sulfenic acid (-SOH); alternate. A Glycyl cysteine thioester (Cys-Gly) (interchain with G-Cter in ubiquitin); alternate cross-link involves residue Cys215. A KxHxx motif is present at residues 219-225 (AEKSHQE).

It belongs to the INSIG family. In terms of assembly, interacts with SCAP; interaction is direct and only takes place in the presence of sterols; it prevents interaction between SCAP and the coat protein complex II (COPII). Associates with the SCAP-SREBP complex (composed of SCAP and SREBF1/SREBP1 or SREBF2/SREBP2); association is mediated via its interaction with SCAP and only takes place in the presence of sterols. Interacts with RNF139. Interacts with RNF145. In terms of processing, phosphorylation at Ser-151 by PCK1 reduces binding to oxysterol, disrupting the interaction between INSIG2 and SCAP, thereby promoting nuclear translocation of SREBP proteins (SREBF1/SREBP1 or SREBF2/SREBP2) and subsequent transcription of downstream lipogenesis-related genes. Post-translationally, polyubiquitinated by AMFR/gp78 at Cys-215 in some tissues such as adipose tissues, undifferentiated myoblasts and liver, leading to its degradation. In differentiated myotubes, Cys-215 oxidation prevents ubiquitination at the same site, resulting in protein stabilization. Oxidized at Cys-215 in differentiated myotubes, preventing ubiquitination at the same site, and resulting in protein stabilization.

The protein localises to the endoplasmic reticulum membrane. Its function is as follows. Oxysterol-binding protein that mediates feedback control of cholesterol synthesis by controlling both endoplasmic reticulum to Golgi transport of SCAP and degradation of HMGCR. Acts as a negative regulator of cholesterol biosynthesis by mediating the retention of the SCAP-SREBP complex in the endoplasmic reticulum, thereby blocking the processing of sterol regulatory element-binding proteins (SREBPs) SREBF1/SREBP1 and SREBF2/SREBP2. Binds oxysterol, including 22-hydroxycholesterol, 24-hydroxycholesterol, 25-hydroxycholesterol and 27-hydroxycholesterol, regulating interaction with SCAP and retention of the SCAP-SREBP complex in the endoplasmic reticulum. In presence of oxysterol, interacts with SCAP, retaining the SCAP-SREBP complex in the endoplasmic reticulum, thereby preventing SCAP from escorting SREBF1/SREBP1 and SREBF2/SREBP2 to the Golgi. Sterol deprivation or phosphorylation by PCK1 reduce oxysterol-binding, disrupting the interaction between INSIG2 and SCAP, thereby promoting Golgi transport of the SCAP-SREBP complex, followed by processing and nuclear translocation of SREBF1/SREBP1 and SREBF2/SREBP2. Also regulates cholesterol synthesis by regulating degradation of HMGCR: initiates the sterol-mediated ubiquitin-mediated endoplasmic reticulum-associated degradation (ERAD) of HMGCR via recruitment of the reductase to the ubiquitin ligase RNF139. In Rattus norvegicus (Rat), this protein is Insulin-induced gene 2 protein.